A 319-amino-acid chain; its full sequence is Acetyl-coenzyme A carboxylase carboxyl transferase subunit beta (319 aa).

One can recognise a CoA carboxyltransferase N-terminal domain in the interval 24 to 293 (LWIKCPDTGQ…MIEQEPEPSA (270 aa)). A disordered region spans residues 282–319 (PEMIEQEPEPSAPVPPDEPDEPAATQEAPPAAPAAPPA).

Belongs to the AccD/PCCB family. In terms of assembly, acetyl-CoA carboxylase is a heterohexamer composed of biotin carboxyl carrier protein (AccB), biotin carboxylase (AccC) and two subunits each of ACCase subunit alpha (AccA) and ACCase subunit beta (AccD).

Its subcellular location is the cytoplasm. It catalyses the reaction N(6)-carboxybiotinyl-L-lysyl-[protein] + acetyl-CoA = N(6)-biotinyl-L-lysyl-[protein] + malonyl-CoA. It functions in the pathway lipid metabolism; malonyl-CoA biosynthesis; malonyl-CoA from acetyl-CoA: step 1/1. Its function is as follows. Component of the acetyl coenzyme A carboxylase (ACC) complex. Biotin carboxylase (BC) catalyzes the carboxylation of biotin on its carrier protein (BCCP) and then the CO(2) group is transferred by the transcarboxylase to acetyl-CoA to form malonyl-CoA. The protein is Acetyl-coenzyme A carboxylase carboxyl transferase subunit beta of Nitrobacter winogradskyi (strain ATCC 25391 / DSM 10237 / CIP 104748 / NCIMB 11846 / Nb-255).